A 471-amino-acid chain; its full sequence is Anthranilate 1,2-dioxygenase large subunit (471 aa).

Residues 52 to 160 (IYACHESEIP…IASYRGFVFV (109 aa)) form the Rieske domain. [2Fe-2S] cluster-binding residues include C93, H95, C113, and H116. Fe cation-binding residues include H220, H225, and D379.

The protein belongs to the bacterial ring-hydroxylating dioxygenase alpha subunit family. In terms of assembly, the anthranilate dioxygenase (AntDO) multicomponent enzyme system is composed of an oxygenase component and a NADH:acceptor reductase component (AntC). The oxygenase component is a heterohexamer of 3 large (AntA) and 3 small (AntB) subunits. The cofactor is Fe cation. [2Fe-2S] cluster serves as cofactor.

It catalyses the reaction anthranilate + NADH + O2 + 3 H(+) = catechol + NH4(+) + CO2 + NAD(+). The catalysed reaction is anthranilate + NADPH + O2 + 3 H(+) = catechol + NH4(+) + CO2 + NADP(+). Its pathway is aromatic compound metabolism; anthranilate degradation via hydroxylation; catechol from anthranilate: step 1/1. Functionally, component of anthranilate dioxygenase multicomponent enzyme system which catalyzes the incorporation of both atoms of molecular oxygen into anthranilate to form catechol. This chain is Anthranilate 1,2-dioxygenase large subunit, found in Acinetobacter baylyi (strain ATCC 33305 / BD413 / ADP1).